Reading from the N-terminus, the 342-residue chain is Pre-mRNA-splicing factor 18 (342 aa).

M1 bears the N-acetylmethionine mark.

The protein belongs to the PRP18 family. As to quaternary structure, heterodimer with PPIH. Interacts with PRPF4 and with the spliceosome. Part of a complex containing U4/U6 snRNPs. Also detected in the cytoplasm. Detected in brain, heart, liver and skeletal muscle.

The protein resides in the nucleus speckle. Functionally, participates in the second step of pre-mRNA splicing. Down-regulates the expression of potassium channel subunits. The polypeptide is Pre-mRNA-splicing factor 18 (Prpf18) (Rattus norvegicus (Rat)).